Consider the following 371-residue polypeptide: DNA replication and repair protein RecF (371 aa).

Residue 30-37 participates in ATP binding; sequence GSNGQGKT.

It belongs to the RecF family.

The protein resides in the cytoplasm. Its function is as follows. The RecF protein is involved in DNA metabolism; it is required for DNA replication and normal SOS inducibility. RecF binds preferentially to single-stranded, linear DNA. It also seems to bind ATP. The sequence is that of DNA replication and repair protein RecF from Acidothermus cellulolyticus (strain ATCC 43068 / DSM 8971 / 11B).